Consider the following 256-residue polypeptide: Kallikrein 1-related peptidase-like b4 (256 aa).

Positions 1-17 (MWFLILFLALSLGGIDA) are cleaved as a signal peptide. The activation peptide homolog stretch occupies residues 18–24 (APPVQSQ). Positions 18–253 (APPVQSQVDC…FSSWIRETMA (236 aa)) constitute a Peptidase S1 domain. A disulfide bond links C45 and C61. Positions 77 and 84 each coordinate Zn(2+). 3 disulfides stabilise this stretch: C147-C214, C179-C193, and C204-C229.

The protein belongs to the peptidase S1 family. Kallikrein subfamily. As to quaternary structure, 7S nerve growth factor is composed of two alpha chains, a beta dimer composed of identical chains, and two gamma chains. It depends on Zn(2+) as a cofactor. In terms of processing, the presence of Gln-24 prevents cleavage of the activation peptide, which remains attached at the amino end of the mature alpha chain.

The polypeptide is Kallikrein 1-related peptidase-like b4 (Klk1b4) (Mus musculus (Mouse)).